A 680-amino-acid polypeptide reads, in one-letter code: Conserved oligomeric Golgi complex subunit 6 (680 aa).

The segment at 479 to 517 is disordered; sequence HKSKKSGQLPRRSRTSSDSSQLTSVDALLSSSPSPPQNN.

This sequence belongs to the COG6 family. Component of the conserved oligomeric Golgi complex which is composed of eight different subunits and is required for normal Golgi morphology and localization. Interacts with COG5, COG7 and COG8.

The protein localises to the golgi apparatus membrane. Required for normal Golgi function. In Arabidopsis thaliana (Mouse-ear cress), this protein is Conserved oligomeric Golgi complex subunit 6.